Here is a 274-residue protein sequence, read N- to C-terminus: NH(3)-dependent NAD(+) synthetase (274 aa).

G46–S53 is a binding site for ATP. D52 is a Mg(2+) binding site. R140 contributes to the deamido-NAD(+) binding site. T160 lines the ATP pocket. A Mg(2+)-binding site is contributed by E165. Positions 173 and 180 each coordinate deamido-NAD(+). The ATP site is built by K189 and T211. H260–K261 contacts deamido-NAD(+).

This sequence belongs to the NAD synthetase family. As to quaternary structure, homodimer.

It catalyses the reaction deamido-NAD(+) + NH4(+) + ATP = AMP + diphosphate + NAD(+) + H(+). It functions in the pathway cofactor biosynthesis; NAD(+) biosynthesis; NAD(+) from deamido-NAD(+) (ammonia route): step 1/1. In terms of biological role, catalyzes the ATP-dependent amidation of deamido-NAD to form NAD. Uses ammonia as a nitrogen source. This is NH(3)-dependent NAD(+) synthetase from Listeria monocytogenes serovar 1/2a (strain ATCC BAA-679 / EGD-e).